A 273-amino-acid polypeptide reads, in one-letter code: Large ribosomal subunit protein uL2 (273 aa).

The disordered stretch occupies residues 224 to 260; that stretch reads AMNPVDHPHGGGEGKTSGGRHPVTPWGKKTKGKKTRK. Over residues 251–260 the composition is skewed to basic residues; it reads KKTKGKKTRK.

The protein belongs to the universal ribosomal protein uL2 family. As to quaternary structure, part of the 50S ribosomal subunit. Forms a bridge to the 30S subunit in the 70S ribosome.

In terms of biological role, one of the primary rRNA binding proteins. Required for association of the 30S and 50S subunits to form the 70S ribosome, for tRNA binding and peptide bond formation. It has been suggested to have peptidyltransferase activity; this is somewhat controversial. Makes several contacts with the 16S rRNA in the 70S ribosome. In Orientia tsutsugamushi (strain Ikeda) (Rickettsia tsutsugamushi), this protein is Large ribosomal subunit protein uL2.